Here is a 685-residue protein sequence, read N- to C-terminus: Pentatricopeptide repeat-containing protein At5g19020, mitochondrial (685 aa).

A mitochondrion-targeting transit peptide spans 1-23 (MIKLIRFFRSRRCWVISLQARCF). 17 PPR repeats span residues 40 to 74 (TERA…GLDS), 75 to 105 (NGYI…HAKL), 106 to 136 (DSAS…MPER), 137 to 171 (SCVS…GIML), 172 to 206 (NEVT…KLEG), 207 to 237 (RVFV…MPER), 238 to 268 (NLVT…ITEK), 269 to 303 (DIVS…GMKP), 304 to 338 (SEVM…GFDC), 339 to 369 (YDFL…SVKD), 370 to 400 (HIAS…THDK), 401 to 435 (DIFS…SQVK), 437 to 471 (DAIT…TIPP), 472 to 502 (NDNL…TKNI), 506 to 540 (TISP…PIKP), 541 to 576 (NSIT…GIEP), and 577 to 607 (DIKH…MPVK). A type E motif; degenerate region spans residues 612-685 (IWGMLLSASR…EWSRAFSGVV (74 aa)).

Belongs to the PPR family. PCMP-E subfamily.

It is found in the mitochondrion. The sequence is that of Pentatricopeptide repeat-containing protein At5g19020, mitochondrial (PCMP-E42) from Arabidopsis thaliana (Mouse-ear cress).